A 732-amino-acid chain; its full sequence is DNA-directed RNA polymerase subunit beta' (732 aa).

Zn(2+) is bound by residues cysteine 70, cysteine 72, cysteine 85, and cysteine 88. 3 residues coordinate Mg(2+): aspartate 575, aspartate 577, and aspartate 579.

The protein belongs to the RNA polymerase beta' chain family. RpoC1 subfamily. In plastids the minimal PEP RNA polymerase catalytic core is composed of four subunits: alpha, beta, beta', and beta''. When a (nuclear-encoded) sigma factor is associated with the core the holoenzyme is formed, which can initiate transcription. The cofactor is Mg(2+). It depends on Zn(2+) as a cofactor.

The protein resides in the plastid. It localises to the chloroplast. It catalyses the reaction RNA(n) + a ribonucleoside 5'-triphosphate = RNA(n+1) + diphosphate. Its function is as follows. DNA-dependent RNA polymerase catalyzes the transcription of DNA into RNA using the four ribonucleoside triphosphates as substrates. The protein is DNA-directed RNA polymerase subunit beta' of Thalassiosira pseudonana (Marine diatom).